Consider the following 242-residue polypeptide: Type III pantothenate kinase (242 aa).

5–12 (DLGNTRLK) is an ATP binding site. Substrate contacts are provided by residues tyrosine 94 and 100–103 (GCDR). The Proton acceptor role is filled by aspartate 102. Threonine 124 lines the ATP pocket. A substrate-binding site is contributed by threonine 175.

Belongs to the type III pantothenate kinase family. Homodimer. NH4(+) serves as cofactor. Requires K(+) as cofactor.

The protein localises to the cytoplasm. It catalyses the reaction (R)-pantothenate + ATP = (R)-4'-phosphopantothenate + ADP + H(+). Its pathway is cofactor biosynthesis; coenzyme A biosynthesis; CoA from (R)-pantothenate: step 1/5. Its function is as follows. Catalyzes the phosphorylation of pantothenate (Pan), the first step in CoA biosynthesis. This Psychrobacter arcticus (strain DSM 17307 / VKM B-2377 / 273-4) protein is Type III pantothenate kinase.